A 172-amino-acid polypeptide reads, in one-letter code: uncharacterized protein (172 aa).

The next 3 membrane-spanning stretches (helical) occupy residues 44-68, 86-110, and 117-135; these read VLVS…AALT, LASY…VFSL, and VVFI…VTLF.

It belongs to the chlamydial CPn_0442/CT_006/TC_0274 family.

It is found in the cell membrane. This is an uncharacterized protein from Chlamydia pneumoniae (Chlamydophila pneumoniae).